A 588-amino-acid chain; its full sequence is Probable fumarate reductase Ifc3 (588 aa).

A signal peptide spans 1-22; sequence MKLKYLVSAMALVVLSSGTAMA. Heme c is bound by residues His31, Cys37, Cys40, His41, Cys58, Cys61, His62, His78, His81, Cys87, Cys90, His91, Gly93, His94, Cys101, Cys104, and His105. The tract at residues 135 to 588 is flavoprotein-like; the sequence is AIAAGPSETT…DNAAKHALDK (454 aa). The FAD site is built by Ala154, Asp173, Asn181, Ser182, Gly187, and Gly188. Gly187 serves as a coordination point for fumarate. Gly187 contributes to the succinate binding site. Position 218 (Arg218) interacts with heme c. Residues Val295 and Asp361 each contribute to the FAD site. 3 residues coordinate succinate: His382, Ser394, and Glu395. Residues Ser394 and Glu395 each coordinate fumarate. Arg419 functions as the Proton donor in the catalytic mechanism. His521 contacts fumarate. His521 is a binding site for succinate. An FAD-binding site is contributed by Glu551. The fumarate site is built by Arg561 and Gly564. Residues Arg561 and Gly564 each coordinate succinate. The FAD site is built by Gly564, Ala566, and Ile567.

Homodimer. FAD serves as cofactor. The cofactor is heme c.

Its subcellular location is the periplasm. Flavocytochrome that catalyzes the reduction of fumarate to succinate in vitro. Is essentially unidirectional, catalyzing only fumarate reduction. In vitro, can use the artificial electron donor methyl viologen. May be involved in an alternative route for electron transport to Fe(3+). In Shewanella frigidimarina (strain NCIMB 400), this protein is Probable fumarate reductase Ifc3.